The following is a 318-amino-acid chain: Olfactory receptor 2A2 (318 aa).

Residues 1–24 (MEGNQTWITDITLLGFQVGPALAI) lie on the Extracellular side of the membrane. Asparagine 4 carries an N-linked (GlcNAc...) asparagine glycan. Residues 25–48 (LLCGLFSVFYTLTLLGNGVIFGII) form a helical membrane-spanning segment. At 49 to 56 (CLDSKLHT) the chain is on the cytoplasmic side. Residues 57–78 (PMYFFLSHLAIIDMSYASNNVP) traverse the membrane as a helical segment. The Extracellular portion of the chain corresponds to 79–99 (KMLANLMNQKRTISFVPCIMQ). A helical membrane pass occupies residues 100-119 (TFLYLAFAVTECLILVVMSY). Residues 120–138 (DRYVAICHPFQYTVIMSWR) are Cytoplasmic-facing. Residues 139 to 157 (VCTILVLTSWSCGFALSLV) traverse the membrane as a helical segment. Residues 158 to 194 (HEILLLRLPFCGPRDVNHLFCEILSVLKLACADTWVN) are Extracellular-facing. Residues 195–218 (QVVIFATCVFVLVGPLSLILVSYM) form a helical membrane-spanning segment. At 219–235 (HILGAILKIQTKEGRIK) the chain is on the cytoplasmic side. A helical transmembrane segment spans residues 236–258 (AFSTCSSHLCVVGLFFGIAMVVY). Residues 259–271 (MVPDSNQREEQEK) lie on the Extracellular side of the membrane. The helical transmembrane segment at 272–291 (MLSLFHSVFNPMLNPLIYSL) threads the bilayer. The Cytoplasmic segment spans residues 292-310 (RNAQLKGALHRALQRKRSM).

This sequence belongs to the G-protein coupled receptor 1 family.

It localises to the cell membrane. Functionally, odorant receptor. This chain is Olfactory receptor 2A2 (OR2A2), found in Homo sapiens (Human).